The primary structure comprises 309 residues: NAD kinase (309 aa).

Asp-89 acts as the Proton acceptor in catalysis. NAD(+) is bound by residues Asp-89 to Gly-90, Asn-163 to Glu-164, His-174, Arg-191, Asp-193, and Thr-204 to Ser-209.

Belongs to the NAD kinase family. A divalent metal cation serves as cofactor.

It is found in the cytoplasm. It carries out the reaction NAD(+) + ATP = ADP + NADP(+) + H(+). Functionally, involved in the regulation of the intracellular balance of NAD and NADP, and is a key enzyme in the biosynthesis of NADP. Catalyzes specifically the phosphorylation on 2'-hydroxyl of the adenosine moiety of NAD to yield NADP. This is NAD kinase from Shewanella sp. (strain W3-18-1).